We begin with the raw amino-acid sequence, 476 residues long: Probable cytosolic Fe-S cluster assembly factor GI11683 (476 aa).

The [4Fe-4S] cluster site is built by Cys23, Cys68, Cys71, Cys74, Cys187, Cys243, Cys395, and Cys399.

It belongs to the NARF family.

Component of the cytosolic iron-sulfur (Fe/S) protein assembly machinery. Required for maturation of extramitochondrial Fe/S proteins. The sequence is that of Probable cytosolic Fe-S cluster assembly factor GI11683 from Drosophila mojavensis (Fruit fly).